The following is a 487-amino-acid chain: MNTLKDIKIKNIKYYHTDDIIGLKLSQFKSCTNGRRLISNLNIDDNNYIFATNKSGKWIETDGKSRKFDKVLIKVSWIKENILDDDENDNENDNENDVENENDVENENDDENENDDDDDENDDDDDEIIMAPGIIKLNKNEKIRDDKNKIVDIEVRGTRDPRNCFFKASDVSKGFGMKNLSDTISRSSGYKLGIHYRYFYLQKNTDSIRKKNKIKKIKKIYLTYEGLLRVMFVSKNDRVSRFIMWATNTLFTAHLGTKEQKNMLSSKLMGITTDIVKEVFNKTSSTLPTLYLFTIGKVKDLRVTLDIGEEYDDECIVAKGGETIDLTRRIDEHTESYGKMPGAKLLLKSYNYIDPQYTSKAETDLFQVLKKMNYIFKHPKYKEIIIYTKKESDLITKEFSKIARDYTGHIKEISDKLKCFENQYNIMKLEYEKEIANKEKEIMQLEKENSDLKYQNEIIELKYKNKLLEKDRKIAKLEKNIKKSGLK.

The disordered stretch occupies residues 84–125 (DDDENDNENDNENDVENENDVENENDDENENDDDDDENDDDD). The stretch at 410 to 485 (IKEISDKLKC…KLEKNIKKSG (76 aa)) forms a coiled coil.

Belongs to the mimivirus L5 family.

This is an uncharacterized protein from Acanthamoeba polyphaga (Amoeba).